Consider the following 399-residue polypeptide: Chorismate synthase (399 aa).

2 residues coordinate NADP(+): Arg-40 and Arg-46. FMN contacts are provided by residues 129–131 (RSS), 257–258 (QA), Gly-302, 317–321 (KPISS), and Arg-343.

This sequence belongs to the chorismate synthase family. As to quaternary structure, homotetramer. Requires FMNH2 as cofactor.

It catalyses the reaction 5-O-(1-carboxyvinyl)-3-phosphoshikimate = chorismate + phosphate. Its pathway is metabolic intermediate biosynthesis; chorismate biosynthesis; chorismate from D-erythrose 4-phosphate and phosphoenolpyruvate: step 7/7. Catalyzes the anti-1,4-elimination of the C-3 phosphate and the C-6 proR hydrogen from 5-enolpyruvylshikimate-3-phosphate (EPSP) to yield chorismate, which is the branch point compound that serves as the starting substrate for the three terminal pathways of aromatic amino acid biosynthesis. This reaction introduces a second double bond into the aromatic ring system. The protein is Chorismate synthase of Chlorobium chlorochromatii (strain CaD3).